The sequence spans 344 residues: Anthranilate phosphoribosyltransferase (344 aa).

5-phospho-alpha-D-ribose 1-diphosphate contacts are provided by residues Gly86, 89 to 90, Thr94, 96 to 99, 114 to 122, and Ser126; these read GD, NIST, and KHGNKSASG. Gly86 lines the anthranilate pocket. Ser98 contacts Mg(2+). Asn117 contacts anthranilate. Arg172 contacts anthranilate. The Mg(2+) site is built by Asp231 and Glu232.

It belongs to the anthranilate phosphoribosyltransferase family. Homodimer. Mg(2+) is required as a cofactor.

The catalysed reaction is N-(5-phospho-beta-D-ribosyl)anthranilate + diphosphate = 5-phospho-alpha-D-ribose 1-diphosphate + anthranilate. The protein operates within amino-acid biosynthesis; L-tryptophan biosynthesis; L-tryptophan from chorismate: step 2/5. In terms of biological role, catalyzes the transfer of the phosphoribosyl group of 5-phosphorylribose-1-pyrophosphate (PRPP) to anthranilate to yield N-(5'-phosphoribosyl)-anthranilate (PRA). The chain is Anthranilate phosphoribosyltransferase from Prochlorococcus marinus (strain AS9601).